Reading from the N-terminus, the 402-residue chain is 4-hydroxy-3-methylbut-2-enyl diphosphate reductase (402 aa).

[4Fe-4S] cluster is bound at residue Cys66. His96 contacts (2E)-4-hydroxy-3-methylbut-2-enyl diphosphate. His96 provides a ligand contact to dimethylallyl diphosphate. His96 is a binding site for isopentenyl diphosphate. Cys157 is a binding site for [4Fe-4S] cluster. His185 serves as a coordination point for (2E)-4-hydroxy-3-methylbut-2-enyl diphosphate. His185 contacts dimethylallyl diphosphate. Isopentenyl diphosphate is bound at residue His185. Residue Glu187 is the Proton donor of the active site. Thr250 contacts (2E)-4-hydroxy-3-methylbut-2-enyl diphosphate. Residue Cys288 participates in [4Fe-4S] cluster binding. (2E)-4-hydroxy-3-methylbut-2-enyl diphosphate is bound by residues Ser317, Ser318, Asn319, and Ser379. Dimethylallyl diphosphate is bound by residues Ser317, Ser318, Asn319, and Ser379. The isopentenyl diphosphate site is built by Ser317, Ser318, Asn319, and Ser379.

Belongs to the IspH family. It depends on [4Fe-4S] cluster as a cofactor.

The enzyme catalyses isopentenyl diphosphate + 2 oxidized [2Fe-2S]-[ferredoxin] + H2O = (2E)-4-hydroxy-3-methylbut-2-enyl diphosphate + 2 reduced [2Fe-2S]-[ferredoxin] + 2 H(+). It catalyses the reaction dimethylallyl diphosphate + 2 oxidized [2Fe-2S]-[ferredoxin] + H2O = (2E)-4-hydroxy-3-methylbut-2-enyl diphosphate + 2 reduced [2Fe-2S]-[ferredoxin] + 2 H(+). Its pathway is isoprenoid biosynthesis; dimethylallyl diphosphate biosynthesis; dimethylallyl diphosphate from (2E)-4-hydroxy-3-methylbutenyl diphosphate: step 1/1. The protein operates within isoprenoid biosynthesis; isopentenyl diphosphate biosynthesis via DXP pathway; isopentenyl diphosphate from 1-deoxy-D-xylulose 5-phosphate: step 6/6. Functionally, catalyzes the conversion of 1-hydroxy-2-methyl-2-(E)-butenyl 4-diphosphate (HMBPP) into a mixture of isopentenyl diphosphate (IPP) and dimethylallyl diphosphate (DMAPP). Acts in the terminal step of the DOXP/MEP pathway for isoprenoid precursor biosynthesis. This Nostoc punctiforme (strain ATCC 29133 / PCC 73102) protein is 4-hydroxy-3-methylbut-2-enyl diphosphate reductase.